A 341-amino-acid polypeptide reads, in one-letter code: L-threonine 3-dehydrogenase (341 aa).

Cys38 contributes to the Zn(2+) binding site. Residues Thr40 and His43 each act as charge relay system in the active site. The Zn(2+) site is built by His63, Glu64, Cys93, Cys96, Cys99, and Cys107. NAD(+)-binding positions include Ile175, Asp195, Arg200, 262 to 264 (LGI), and 286 to 287 (IY).

It belongs to the zinc-containing alcohol dehydrogenase family. In terms of assembly, homotetramer. Zn(2+) serves as cofactor.

It localises to the cytoplasm. The enzyme catalyses L-threonine + NAD(+) = (2S)-2-amino-3-oxobutanoate + NADH + H(+). It functions in the pathway amino-acid degradation; L-threonine degradation via oxydo-reductase pathway; glycine from L-threonine: step 1/2. Functionally, catalyzes the NAD(+)-dependent oxidation of L-threonine to 2-amino-3-ketobutyrate. The chain is L-threonine 3-dehydrogenase from Shewanella woodyi (strain ATCC 51908 / MS32).